Reading from the N-terminus, the 128-residue chain is Protein C10 (128 aa).

This sequence belongs to the UPF0456 family.

The protein localises to the cytoplasm. In Xenopus tropicalis (Western clawed frog), this protein is Protein C10.